A 366-amino-acid chain; its full sequence is tRNA/tmRNA (uracil-C(5))-methyltransferase (366 aa).

5 residues coordinate S-adenosyl-L-methionine: Gln190, Tyr218, Asn223, Glu239, and Asp299. The Nucleophile role is filled by Cys324. The active-site Proton acceptor is Glu358.

The protein belongs to the class I-like SAM-binding methyltransferase superfamily. RNA M5U methyltransferase family. TrmA subfamily.

The enzyme catalyses uridine(54) in tRNA + S-adenosyl-L-methionine = 5-methyluridine(54) in tRNA + S-adenosyl-L-homocysteine + H(+). It catalyses the reaction uridine(341) in tmRNA + S-adenosyl-L-methionine = 5-methyluridine(341) in tmRNA + S-adenosyl-L-homocysteine + H(+). In terms of biological role, dual-specificity methyltransferase that catalyzes the formation of 5-methyluridine at position 54 (m5U54) in all tRNAs, and that of position 341 (m5U341) in tmRNA (transfer-mRNA). This Citrobacter koseri (strain ATCC BAA-895 / CDC 4225-83 / SGSC4696) protein is tRNA/tmRNA (uracil-C(5))-methyltransferase.